A 142-amino-acid polypeptide reads, in one-letter code: Large ribosomal subunit protein uL11 (142 aa).

This sequence belongs to the universal ribosomal protein uL11 family. Part of the ribosomal stalk of the 50S ribosomal subunit. Interacts with L10 and the large rRNA to form the base of the stalk. L10 forms an elongated spine to which L12 dimers bind in a sequential fashion forming a multimeric L10(L12)X complex. In terms of processing, one or more lysine residues are methylated.

In terms of biological role, forms part of the ribosomal stalk which helps the ribosome interact with GTP-bound translation factors. This Rhodopseudomonas palustris (strain BisB18) protein is Large ribosomal subunit protein uL11.